We begin with the raw amino-acid sequence, 140 residues long: Large ribosomal subunit protein uL14 (140 aa).

Belongs to the universal ribosomal protein uL14 family.

The sequence is that of Large ribosomal subunit protein uL14 (RpL23) from Drosophila melanogaster (Fruit fly).